A 417-amino-acid polypeptide reads, in one-letter code: D-amino acid dehydrogenase (417 aa).

Residue 3–17 participates in FAD binding; it reads AVVLGSGVVGLMSAW.

The protein belongs to the DadA oxidoreductase family. It depends on FAD as a cofactor.

The catalysed reaction is a D-alpha-amino acid + A + H2O = a 2-oxocarboxylate + AH2 + NH4(+). Oxidative deamination of D-amino acids. The polypeptide is D-amino acid dehydrogenase (Vibrio vulnificus (strain CMCP6)).